The chain runs to 804 residues: Probable exo-1,4-beta-xylosidase xlnD (804 aa).

A signal peptide spans 1 to 26 (MAHSMSRPVAATAAALLALALPQALA). N-linked (GlcNAc...) asparagine glycans are attached at residues Asn29, Asn124, Asn148, Asn242, and Asn251. Asp315 is a catalytic residue. Residues Asn357, Asn390, Asn413, Asn444, Asn455, Asn573, Asn576, Asn665, Asn696, and Asn718 are each glycosylated (N-linked (GlcNAc...) asparagine).

Belongs to the glycosyl hydrolase 3 family.

Its subcellular location is the secreted. The enzyme catalyses Hydrolysis of (1-&gt;4)-beta-D-xylans, to remove successive D-xylose residues from the non-reducing termini.. It functions in the pathway glycan degradation; xylan degradation. Its function is as follows. Xylan 1,4-beta-xylosidase involved in the hydrolysis of xylan, a major structural heterogeneous polysaccharide found in plant biomass representing the second most abundant polysaccharide in the biosphere, after cellulose. In Aspergillus niger (strain ATCC MYA-4892 / CBS 513.88 / FGSC A1513), this protein is Probable exo-1,4-beta-xylosidase xlnD (xlnD).